The following is a 174-amino-acid chain: Myeloid-derived growth factor (174 aa).

The signal sequence occupies residues 1–32 (MAAPSGRRNGSGGANLWVSLLLAAAALRPVET).

The protein belongs to the MYDGF family.

It localises to the secreted. The protein resides in the endoplasmic reticulum-Golgi intermediate compartment. It is found in the endoplasmic reticulum. The protein localises to the golgi apparatus. Bone marrow-derived monocyte and paracrine-acting protein that promotes cardiac myocyte survival and adaptive angiogenesis for cardiac protection and/or repair after myocardial infarction (MI). Stimulates endothelial cell proliferation through a MAPK1/3-, STAT3- and CCND1-mediated signaling pathway. Inhibits cardiac myocyte apoptosis in a PI3K/AKT-dependent signaling pathway. The polypeptide is Myeloid-derived growth factor (Bos taurus (Bovine)).